Here is a 184-residue protein sequence, read N- to C-terminus: Peptide deformylase (184 aa).

The Fe cation site is built by C111 and H154. E155 is a catalytic residue. H158 serves as a coordination point for Fe cation.

Belongs to the polypeptide deformylase family. Fe(2+) serves as cofactor.

It catalyses the reaction N-terminal N-formyl-L-methionyl-[peptide] + H2O = N-terminal L-methionyl-[peptide] + formate. In terms of biological role, removes the formyl group from the N-terminal Met of newly synthesized proteins. Requires at least a dipeptide for an efficient rate of reaction. N-terminal L-methionine is a prerequisite for activity but the enzyme has broad specificity at other positions. The sequence is that of Peptide deformylase from Pediococcus pentosaceus (strain ATCC 25745 / CCUG 21536 / LMG 10740 / 183-1w).